The chain runs to 416 residues: CC-adding tRNA nucleotidyltransferase (416 aa).

31 to 34 (GAVR) is a binding site for CTP. Mg(2+) is bound by residues D46 and D48. CTP is bound by residues 106-107 (RD), N111, 148-157 (DPLRLLRAYR), and R188.

This sequence belongs to the tRNA nucleotidyltransferase/poly(A) polymerase family. Mg(2+) is required as a cofactor.

The catalysed reaction is a tRNA precursor + 2 CTP = a tRNA with a 3' CC end + 2 diphosphate. Its function is as follows. tRNA nucleotidyltransferase involved in the synthesis of the tRNA CCA terminus. Adds the two cytidine residues to tRNA. The chain is CC-adding tRNA nucleotidyltransferase from Synechocystis sp. (strain ATCC 27184 / PCC 6803 / Kazusa).